Consider the following 304-residue polypeptide: Acetylglutamate kinase (304 aa).

Substrate contacts are provided by residues 82-83, Arg-104, and Asn-197; that span reads GG.

The protein belongs to the acetylglutamate kinase family. ArgB subfamily.

Its subcellular location is the cytoplasm. The catalysed reaction is N-acetyl-L-glutamate + ATP = N-acetyl-L-glutamyl 5-phosphate + ADP. The protein operates within amino-acid biosynthesis; L-arginine biosynthesis; N(2)-acetyl-L-ornithine from L-glutamate: step 2/4. In terms of biological role, catalyzes the ATP-dependent phosphorylation of N-acetyl-L-glutamate. The polypeptide is Acetylglutamate kinase (Prochlorococcus marinus (strain NATL1A)).